The chain runs to 74 residues: uncharacterized protein (74 aa).

A coiled-coil region spans residues glutamine 25–valine 62.

This is an uncharacterized protein from Bacillus subtilis (strain 168).